The following is a 279-amino-acid chain: NLP effector protein 9 (279 aa).

The first 19 residues, 1–19 (MKISNLLGVLVVFLAVVKG), serve as a signal peptide directing secretion. Positions 151 to 161 (AIMYAWYFPDI) match the Conserved undecapeptide motif motif. An N-linked (GlcNAc...) asparagine glycan is attached at Asn-176.

Belongs to the Necrosis inducing protein (NPP1) family.

The protein localises to the secreted. Its function is as follows. Secreted effector that acts as a pathogen-associated molecular pattern (PAMP) recognized by the plant immune system. Seems not to induce necrosis in Nicotiana benthamiana leaves. This is NLP effector protein 9 from Plasmopara viticola (Downy mildew of grapevine).